The following is a 287-amino-acid chain: ATP synthase gamma chain (287 aa).

The protein belongs to the ATPase gamma chain family. F-type ATPases have 2 components, CF(1) - the catalytic core - and CF(0) - the membrane proton channel. CF(1) has five subunits: alpha(3), beta(3), gamma(1), delta(1), epsilon(1). CF(0) has three main subunits: a, b and c.

Its subcellular location is the cell inner membrane. Produces ATP from ADP in the presence of a proton gradient across the membrane. The gamma chain is believed to be important in regulating ATPase activity and the flow of protons through the CF(0) complex. The sequence is that of ATP synthase gamma chain from Yersinia pestis.